Consider the following 326-residue polypeptide: Serpentine receptor class alpha-12 (326 aa).

The Extracellular segment spans residues 1 to 17; the sequence is MSCASEVQAQLFTHPVQ. A helical membrane pass occupies residues 18 to 38; that stretch reads IIYACVQTVLFLATIIGSLLA. The Cytoplasmic segment spans residues 39–54; it reads IVQLCKKTTIPDSTKV. The helical transmembrane segment at 55–75 threads the bilayer; that stretch reads LLIGALFFANAHELAYFSSPF. Residues 76 to 101 are Extracellular-facing; that stretch reads KVFKMNLFHTNTSCYPLASTLECIPT. The chain crosses the membrane as a helical span at residues 102–122; sequence TTVLAMGISGNMLIQSALSIF. The Cytoplasmic segment spans residues 123-138; it reads RLLATIFPVCYSRMRA. Residues 139–159 traverse the membrane as a helical segment; the sequence is LPGVVLLFMVLIPSFLSYSWI. At 160-185 the chain is on the extracellular side; that stretch reads RSDIVLDDYQMFCSQWSANISSRANT. A helical transmembrane segment spans residues 186-206; it reads YLEYCSYLTVAHIIINALIIL. Topologically, residues 207–234 are cytoplasmic; it reads RNRSVESKCRFDVQQRYLNSETLKTTQT. Residues 235-255 traverse the membrane as a helical segment; it reads ICYLSIAQFLAMFLYSGGVLF. The Extracellular segment spans residues 256–270; the sequence is MRKNQKNIPTLIYIN. The helical transmembrane segment at 271–291 threads the bilayer; the sequence is VIVWVYAPPYACVSLAPLILF. Residues 292 to 326 are Cytoplasmic-facing; sequence SLWNLKKQRQIRIQSITVQKETQEDHIRKLQLSWG.

It belongs to the nematode receptor-like protein sra family.

Its subcellular location is the membrane. In Caenorhabditis briggsae, this protein is Serpentine receptor class alpha-12.